A 612-amino-acid chain; its full sequence is Kelch-like protein 40a (612 aa).

One can recognise a BTB domain in the interval 34 to 101 (VDCILKIKDK…IYTSDINLTE (68 aa)). One can recognise a BACK domain in the interval 136–238 (CLAIFRLGLL…PTSYFKEKVE (103 aa)). Residues 266 to 275 (RVKRSSHRKE) are compositionally biased toward basic residues. A disordered region spans residues 266–290 (RVKRSSHRKEGKSAEFESDDDDEDG). A compositionally biased stretch (acidic residues) spans 281–290 (FESDDDDEDG). Kelch repeat units follow at residues 350-402 (QIFV…EAEN), 403-452 (SIYV…SHKG), 453-500 (LVYV…VHKN), 502-547 (IYVV…ELGG), and 549-604 (LYAI…GVRL).

It belongs to the KLHL40 family. As to quaternary structure, component of the BCR(KLHL40) E3 ubiquitin ligase complex. As to expression, expressed in skeletal muscle and heart. Detected, although at much lower levels, in brain, eye and fin.

The protein localises to the cytoplasm. Its subcellular location is the myofibril. It localises to the sarcomere. It is found in the a band. The protein resides in the i band. Substrate-specific adapter of a BCR (BTB-CUL3-RBX1) E3 ubiquitin ligase complex. Required for skeletal muscle development. The chain is Kelch-like protein 40a (klhl40a) from Danio rerio (Zebrafish).